A 209-amino-acid chain; its full sequence is V-type ATP synthase subunit D (209 aa).

This sequence belongs to the V-ATPase D subunit family.

Produces ATP from ADP in the presence of a proton gradient across the membrane. The sequence is that of V-type ATP synthase subunit D from Anaeromyxobacter dehalogenans (strain 2CP-1 / ATCC BAA-258).